Reading from the N-terminus, the 200-residue chain is Imidazole glycerol phosphate synthase subunit HisH (200 aa).

The Glutamine amidotransferase type-1 domain maps to 3–200; it reads DLALIDAGGA…LRNFLEMSFP (198 aa). Cys-78 (nucleophile) is an active-site residue. Catalysis depends on residues His-179 and Glu-181.

As to quaternary structure, heterodimer of HisH and HisF.

It is found in the cytoplasm. The catalysed reaction is 5-[(5-phospho-1-deoxy-D-ribulos-1-ylimino)methylamino]-1-(5-phospho-beta-D-ribosyl)imidazole-4-carboxamide + L-glutamine = D-erythro-1-(imidazol-4-yl)glycerol 3-phosphate + 5-amino-1-(5-phospho-beta-D-ribosyl)imidazole-4-carboxamide + L-glutamate + H(+). It carries out the reaction L-glutamine + H2O = L-glutamate + NH4(+). Its pathway is amino-acid biosynthesis; L-histidine biosynthesis; L-histidine from 5-phospho-alpha-D-ribose 1-diphosphate: step 5/9. IGPS catalyzes the conversion of PRFAR and glutamine to IGP, AICAR and glutamate. The HisH subunit catalyzes the hydrolysis of glutamine to glutamate and ammonia as part of the synthesis of IGP and AICAR. The resulting ammonia molecule is channeled to the active site of HisF. The chain is Imidazole glycerol phosphate synthase subunit HisH from Xanthomonas campestris pv. campestris (strain 8004).